Here is a 67-residue protein sequence, read N- to C-terminus: Large ribosomal subunit protein bL35 (67 aa).

Belongs to the bacterial ribosomal protein bL35 family.

The sequence is that of Large ribosomal subunit protein bL35 from Caldanaerobacter subterraneus subsp. tengcongensis (strain DSM 15242 / JCM 11007 / NBRC 100824 / MB4) (Thermoanaerobacter tengcongensis).